The following is a 203-amino-acid chain: MKDIEDLIEKAVELQSNGLISAQIADELNISRETVTWLLTRSKKEEATPAPKDISVDWSSIGKSAKRLHNISLALCDMVLETMEKVNAEVDVVVGIAANGVPLASMMAYELDADFAIYHRKGQGIVHAGHRGTISRNFGSVAGKNCIIVDDVITTGSTSMEVIEQLKEMDAKPRVVTVLVDKKGVDTIYNVPIQSLVRIARVD.

This sequence belongs to the purine/pyrimidine phosphoribosyltransferase family. GfcR subfamily.

The polypeptide is Transcriptional regulator GfcR 2 (Methanosarcina acetivorans (strain ATCC 35395 / DSM 2834 / JCM 12185 / C2A)).